The primary structure comprises 930 residues: Isoleucine--tRNA ligase (930 aa).

Positions 57–67 match the 'HIGH' region motif; the sequence is PYANGNIHVGH. An L-isoleucyl-5'-AMP-binding site is contributed by Glu554. A 'KMSKS' region motif is present at residues 595-599; that stretch reads KMSKS. Residue Lys598 participates in ATP binding. 4 residues coordinate Zn(2+): Cys888, Cys891, Cys908, and Cys911.

This sequence belongs to the class-I aminoacyl-tRNA synthetase family. IleS type 1 subfamily. In terms of assembly, monomer. The cofactor is Zn(2+).

The protein localises to the cytoplasm. The enzyme catalyses tRNA(Ile) + L-isoleucine + ATP = L-isoleucyl-tRNA(Ile) + AMP + diphosphate. Functionally, catalyzes the attachment of isoleucine to tRNA(Ile). As IleRS can inadvertently accommodate and process structurally similar amino acids such as valine, to avoid such errors it has two additional distinct tRNA(Ile)-dependent editing activities. One activity is designated as 'pretransfer' editing and involves the hydrolysis of activated Val-AMP. The other activity is designated 'posttransfer' editing and involves deacylation of mischarged Val-tRNA(Ile). In Streptococcus pneumoniae (strain ATCC BAA-255 / R6), this protein is Isoleucine--tRNA ligase.